Here is a 152-residue protein sequence, read N- to C-terminus: Deoxyuridine 5'-triphosphate nucleotidohydrolase (152 aa).

Residues 71–73 (RSG), Asn-84, 88–90 (LID), and Met-98 each bind substrate.

This sequence belongs to the dUTPase family. Mg(2+) serves as cofactor.

It carries out the reaction dUTP + H2O = dUMP + diphosphate + H(+). The protein operates within pyrimidine metabolism; dUMP biosynthesis; dUMP from dCTP (dUTP route): step 2/2. Functionally, this enzyme is involved in nucleotide metabolism: it produces dUMP, the immediate precursor of thymidine nucleotides and it decreases the intracellular concentration of dUTP so that uracil cannot be incorporated into DNA. In Klebsiella pneumoniae (strain 342), this protein is Deoxyuridine 5'-triphosphate nucleotidohydrolase.